A 445-amino-acid polypeptide reads, in one-letter code: Aminopeptidase S (445 aa).

The N-terminal stretch at 1 to 45 is a signal peptide; the sequence is MRPNRFSLRRSPTAVAAVALAAVLAAGAPAAQAAGAAAPTAAAAA. The Ca(2+) site is built by D48 and I49. Residues H130 and D142 each contribute to the Zn(2+) site. The active-site Proton acceptor is the E176. E177, D205, and H292 together coordinate Zn(2+). Residues C290 and C295 are joined by a disulfide bond. Ca(2+)-binding residues include D307 and D311. The P/Homo B domain maps to 325-445; sequence GEPPTGEGVF…GYIDSWKLTF (121 aa). A propeptide spans 330-445 (removed in mature form); sequence GEGVFSNTTD…GYIDSWKLTF (116 aa).

The protein belongs to the peptidase M28 family. M28A subfamily. As to quaternary structure, monomer. Ca(2+) is required as a cofactor. Requires Zn(2+) as cofactor. The cofactor is Mn(2+). Co(2+) serves as cofactor.

Its subcellular location is the secreted. It catalyses the reaction Release of an N-terminal amino acid with a preference for large hydrophobic amino-terminus residues.. Calcium activates the enzyme, inhibited by 1,10-phenanthroline, EDTA and EGTA. End-product inhibited by L-amino acids. Non-competitively inhibited by NaF and NaH(2)PO(4). An exopeptidase specific for larger hydrophobic amino acids (especially leucine), no cleavage occurs if the next residue is proline. The chain is Aminopeptidase S from Streptomyces griseus subsp. griseus (strain JCM 4626 / CBS 651.72 / NBRC 13350 / KCC S-0626 / ISP 5235).